Here is a 98-residue protein sequence, read N- to C-terminus: Integration host factor subunit beta (98 aa).

Belongs to the bacterial histone-like protein family. In terms of assembly, heterodimer of an alpha and a beta chain.

Its function is as follows. This protein is one of the two subunits of integration host factor, a specific DNA-binding protein that functions in genetic recombination as well as in transcriptional and translational control. This is Integration host factor subunit beta from Pseudomonas putida (strain GB-1).